A 557-amino-acid chain; its full sequence is Aerobic glycerol-3-phosphate dehydrogenase (557 aa).

Residue 21 to 49 (DLVIIGGGITGAGIALDASERGMKVALVE) coordinates FAD.

Belongs to the FAD-dependent glycerol-3-phosphate dehydrogenase family. It depends on FAD as a cofactor.

Its subcellular location is the cytoplasm. The catalysed reaction is a quinone + sn-glycerol 3-phosphate = dihydroxyacetone phosphate + a quinol. Its pathway is polyol metabolism; glycerol degradation via glycerol kinase pathway; glycerone phosphate from sn-glycerol 3-phosphate (aerobic route): step 1/1. The sequence is that of Aerobic glycerol-3-phosphate dehydrogenase (glpD) from Staphylococcus aureus (strain USA300).